We begin with the raw amino-acid sequence, 92 residues long: Large ribosomal subunit protein eL31 (92 aa).

This sequence belongs to the eukaryotic ribosomal protein eL31 family.

This is Large ribosomal subunit protein eL31 from Desulfurococcus amylolyticus (strain DSM 18924 / JCM 16383 / VKM B-2413 / 1221n) (Desulfurococcus kamchatkensis).